Consider the following 208-residue polypeptide: N-(5'-phosphoribosyl)anthranilate isomerase (208 aa).

The protein belongs to the TrpF family.

The enzyme catalyses N-(5-phospho-beta-D-ribosyl)anthranilate = 1-(2-carboxyphenylamino)-1-deoxy-D-ribulose 5-phosphate. It participates in amino-acid biosynthesis; L-tryptophan biosynthesis; L-tryptophan from chorismate: step 3/5. This chain is N-(5'-phosphoribosyl)anthranilate isomerase, found in Natronomonas pharaonis (strain ATCC 35678 / DSM 2160 / CIP 103997 / JCM 8858 / NBRC 14720 / NCIMB 2260 / Gabara) (Halobacterium pharaonis).